The chain runs to 525 residues: Vesicular inhibitory amino acid transporter (525 aa).

Residues 1 to 132 are Cytoplasmic-facing; that stretch reads MATLLRSKLT…WNVTNAIQGM (132 aa). A helical membrane pass occupies residues 133-153; it reads FVLGLPYAILHGGYLGLFLII. Residues 154–204 are Lumenal, vesicle-facing; it reads FAAVVCCYTGKILIACLYEENEDGEVVRVRDSYVAIANACCAPRFPTLGGR. 3'-nitrotyrosine is present on Tyr186. The chain crosses the membrane as a helical span at residues 205-225; sequence VVNVAQIIELVMTCILYVVVS. Over 226–265 the chain is Cytoplasmic; the sequence is GNLMYNSFPGLPVSQKSWSIIATAVLLPCAFLKNLKAVSK. A helical transmembrane segment spans residues 266 to 286; it reads FSLLCTLAHFVINILVIAYCL. The Lumenal, vesicle portion of the chain corresponds to 287–305; sequence SRARDWAWEKVKFYIDVKK. A helical transmembrane segment spans residues 306–326; that stretch reads FPISIGIIVFSYTSQIFLPSL. The Cytoplasmic segment spans residues 327–341; that stretch reads EGNMQQPSEFHCMMN. A helical membrane pass occupies residues 342 to 362; that stretch reads WTHIAACVLKGLFALVAYLTW. Residues 363–383 lie on the Lumenal, vesicle side of the membrane; sequence ADETKEVITDNLPGSIRAVVN. Residues 384 to 404 traverse the membrane as a helical segment; the sequence is IFLVAKALLSYPLPFFAAVEV. Topologically, residues 405 to 438 are cytoplasmic; the sequence is LEKSLFQEGSRAFFPACYGGDGRLKSWGLTLRCA. Residues 439–459 traverse the membrane as a helical segment; it reads LVVFTLLMAIYVPHFALLMGL. Topologically, residues 460-461 are lumenal, vesicle; sequence TG. A helical membrane pass occupies residues 462-482; that stretch reads SLTGAGLCFLLPSLFHLRLLW. Residues 483 to 489 lie on the Cytoplasmic side of the membrane; sequence RKLLWHQ. A helical membrane pass occupies residues 490–510; that stretch reads VFFDVAIFVIGGICSVSGFVH. The Lumenal, vesicle segment spans residues 511 to 525; that stretch reads SLEGLIEAYRTNAED.

It belongs to the amino acid/polyamine transporter 2 family. As to expression, brain. Expressed at high levels within the neocortex, hippocampus, cerebellum, striatum, septal nuclei and the reticular nucleus of the thalamus. Also expressed in islets where it is more abundant in the peripheral/mantle region. Highly expressed in the nerve endings of GABA neurons in the brain and spinal cord but also in glycinergic nerve endings. Expressed in glycine-, GABA- or GABA- and glycine-containing boutons.

It localises to the cytoplasmic vesicle. It is found in the secretory vesicle. The protein resides in the synaptic vesicle membrane. The protein localises to the presynapse. The catalysed reaction is beta-alanine(out) + n H(+)(in) = beta-alanine(in) + n H(+)(out). It catalyses the reaction 4-aminobutanoate(out) + n H(+)(in) = 4-aminobutanoate(in) + n H(+)(out). The enzyme catalyses glycine(out) + n H(+)(in) = glycine(in) + n H(+)(out). Antiporter that exchanges vesicular protons for cytosolic 4-aminobutanoate or to a lesser extend glycine, thus allowing their secretion from nerve terminals. The transport is equally dependent on the chemical and electrical components of the proton gradient. May also transport beta-alanine. Acidification of GABAergic synaptic vesicles is a prerequisite for 4-aminobutanoate uptake. This Rattus norvegicus (Rat) protein is Vesicular inhibitory amino acid transporter.